A 143-amino-acid polypeptide reads, in one-letter code: Sporulation-specific cell division protein SsgB (143 aa).

Belongs to the SsgA family. In terms of assembly, interacts with SsgA. Interacts with FtsZ (via N-terminus).

It localises to the cell septum. Functionally, involved in sporulation-specific cell division. Required for early stages of sporulation. Important in the process of growth cessation prior to sporulation-specific cell division. Recruits cell division protein FtsZ to the future septum sites and tethers the contractile ring structure (Z ring) to the cytoplasmic membrane during sporulation. Stimulates polymerization and filament length of FtsZ in vitro. The polypeptide is Sporulation-specific cell division protein SsgB (Frankia casuarinae (strain DSM 45818 / CECT 9043 / HFP020203 / CcI3)).